A 197-amino-acid polypeptide reads, in one-letter code: Dephospho-CoA kinase (197 aa).

One can recognise a DPCK domain in the interval 5–197 (RLGLTGSIGM…IAHIRETADA (193 aa)). An ATP-binding site is contributed by 13-18 (GMGKST).

It belongs to the CoaE family.

The protein resides in the cytoplasm. The catalysed reaction is 3'-dephospho-CoA + ATP = ADP + CoA + H(+). It functions in the pathway cofactor biosynthesis; coenzyme A biosynthesis; CoA from (R)-pantothenate: step 5/5. Catalyzes the phosphorylation of the 3'-hydroxyl group of dephosphocoenzyme A to form coenzyme A. In Cereibacter sphaeroides (strain ATCC 17023 / DSM 158 / JCM 6121 / CCUG 31486 / LMG 2827 / NBRC 12203 / NCIMB 8253 / ATH 2.4.1.) (Rhodobacter sphaeroides), this protein is Dephospho-CoA kinase.